The chain runs to 415 residues: MTNPVLNPALPAMAAAPVAATPSAVGSAGIVAPVFLRFDEPLPLASGQTLNGYELAIETYGTLNAQRTNAVLVCHALNASHHVAGVSADNPKDVGWWDNMVGPGKPVDTNRYFVIGVNNLGSCFGSTGPASINPATGRPWGAAFPVLTVEDWVRAQARVADHFGIERFAAVMGGSLGGMQALSWAITCPQRVANCVVVASTPRLSAQNIGFNEVARRAIITDPDFHGGDYYAHGTVPGRGLSVARMIGHITYLSDDDMAEKFGRTRREPAADGAYRYGYDVEFEVESYLRYQGEKFSRYFDANTYLLITRALDYFDPARATGGDLARALAPATADFLLVSFSTDWRFPPERSREMVRALLKNGSPVTYAEIDAPHGHDAFLLDDARYHAVVRGYYERIARELGLNGAVAPEGNSA.

One can recognise an AB hydrolase-1 domain in the interval 69–383; the sequence is NAVLVCHALN…PHGHDAFLLD (315 aa). Ser-175 serves as the catalytic Nucleophile. Arg-245 contacts substrate. Catalysis depends on residues Asp-344 and His-377. Asp-378 contributes to the substrate binding site.

This sequence belongs to the AB hydrolase superfamily. MetX family. As to quaternary structure, homodimer.

It localises to the cytoplasm. It carries out the reaction L-homoserine + succinyl-CoA = O-succinyl-L-homoserine + CoA. Its pathway is amino-acid biosynthesis; L-methionine biosynthesis via de novo pathway; O-succinyl-L-homoserine from L-homoserine: step 1/1. Functionally, transfers a succinyl group from succinyl-CoA to L-homoserine, forming succinyl-L-homoserine. The chain is Homoserine O-succinyltransferase from Bordetella pertussis (strain Tohama I / ATCC BAA-589 / NCTC 13251).